The following is a 186-amino-acid chain: NADH-quinone oxidoreductase subunit B (186 aa).

4 residues coordinate [4Fe-4S] cluster: cysteine 44, cysteine 45, cysteine 110, and cysteine 139.

The protein belongs to the complex I 20 kDa subunit family. NDH-1 is composed of 14 different subunits. Subunits NuoB, C, D, E, F, and G constitute the peripheral sector of the complex. [4Fe-4S] cluster is required as a cofactor.

It localises to the cell inner membrane. The catalysed reaction is a quinone + NADH + 5 H(+)(in) = a quinol + NAD(+) + 4 H(+)(out). In terms of biological role, NDH-1 shuttles electrons from NADH, via FMN and iron-sulfur (Fe-S) centers, to quinones in the respiratory chain. The immediate electron acceptor for the enzyme in this species is believed to be ubiquinone. Couples the redox reaction to proton translocation (for every two electrons transferred, four hydrogen ions are translocated across the cytoplasmic membrane), and thus conserves the redox energy in a proton gradient. The chain is NADH-quinone oxidoreductase subunit B from Leptospira interrogans serogroup Icterohaemorrhagiae serovar copenhageni (strain Fiocruz L1-130).